The sequence spans 217 residues: MKVAPSLLSADFMHLAKEIESVSNADFLHVDVMDGHYVPNLTMGPVILENVTQMSQVPLDVHLMVENASFFVELFAPLNPQIISIHAENEKHPHRVLQLIKSSGITPGIVLNPHTHEESIKYLLESVGLVLLMSVNPGFGGQKFLDLVLEKCLKVKELIKRYNPSCLLEVDGGVNDKNIFELQQAGVDVVVSGSYIFESKDRKLAIEGLQNVRQPLA.

A substrate-binding site is contributed by S6. A divalent metal cation-binding residues include H29, D31, and H62. Residue D31 is the Proton acceptor of the active site. Residues H62, 138–141 (GFGG), 171–173 (DGG), and 193–194 (GS) each bind substrate. D171 contacts a divalent metal cation. The Proton donor role is filled by D171.

This sequence belongs to the ribulose-phosphate 3-epimerase family. The cofactor is a divalent metal cation.

It carries out the reaction D-ribulose 5-phosphate = D-xylulose 5-phosphate. Its pathway is carbohydrate degradation. Functionally, catalyzes the reversible epimerization of D-ribulose 5-phosphate to D-xylulose 5-phosphate. This is Ribulose-phosphate 3-epimerase from Helicobacter pylori (strain J99 / ATCC 700824) (Campylobacter pylori J99).